A 953-amino-acid chain; its full sequence is ATP-dependent 6-phosphofructokinase (953 aa).

An N-terminal catalytic PFK domain 1 region spans residues 1–558; the sequence is MIEGISFASF…QLQGFLLTNS (558 aa). Residues Gly193, 256-257, and 286-289 contribute to the ATP site; these read RC and GDGS. Residue Asp287 participates in Mg(2+) binding. Residues 332 to 334, Arg369, 376 to 378, Glu433, Arg460, and 466 to 469 contribute to the substrate site; these read SID, MGR, and HVQR. Catalysis depends on Asp334, which acts as the Proton acceptor. The interdomain linker stretch occupies residues 559–572; that stretch reads ADKDRPQEPAKDPL. Residues 573–953 are C-terminal regulatory PFK domain 2; that stretch reads RVAIVCTGAP…AKEQGIIDPC (381 aa). Beta-D-fructose 2,6-bisphosphate-binding positions include Arg645, 702-706, Arg740, 747-749, Glu807, Arg833, 839-842, and Arg906; these read TISNN, QGG, and HVQQ.

It belongs to the phosphofructokinase type A (PFKA) family. ATP-dependent PFK group I subfamily. Eukaryotic two domain clade 'E' sub-subfamily. Heterooctamer of 4 alpha and 4 beta chains. The cofactor is Mg(2+).

The protein resides in the cytoplasm. It carries out the reaction beta-D-fructose 6-phosphate + ATP = beta-D-fructose 1,6-bisphosphate + ADP + H(+). Its pathway is carbohydrate degradation; glycolysis; D-glyceraldehyde 3-phosphate and glycerone phosphate from D-glucose: step 3/4. Its activity is regulated as follows. Allosterically activated by ADP, AMP, or fructose 2,6-bisphosphate, and allosterically inhibited by ATP or citrate. Functionally, catalyzes the phosphorylation of D-fructose 6-phosphate to fructose 1,6-bisphosphate by ATP, the first committing step of glycolysis. This is ATP-dependent 6-phosphofructokinase (PFK1) from Yarrowia lipolytica (strain CLIB 122 / E 150) (Yeast).